Here is a 135-residue protein sequence, read N- to C-terminus: Probable transcription factor At2g20613 (135 aa).

Positions 1-104 are disordered; the sequence is MSHKRFNPLT…KRGGGGGEEA (104 aa). Over residues 28-41 the composition is skewed to acidic residues; that stretch reads DSSSDEETDSDSDS. The span at 62–80 shows a compositional bias: basic and acidic residues; the sequence is KSVKISEKSVAKRSRETHE.

It belongs to the GeBP family.

In Arabidopsis thaliana (Mouse-ear cress), this protein is Probable transcription factor At2g20613.